The following is a 1065-amino-acid chain: Tubulin glycylase 3C (1065 aa).

Disordered stretches follow at residues 1–146, 158–182, 301–326, 341–360, 381–482, and 708–755; these read MSSL…REDK, IREQ…TKSK, STQK…DIAK, EKKR…KEQL, FFVD…GNGS, and NKQK…EKQM. The span at 23-53 shows a compositional bias: low complexity; the sequence is QEGNQEDLNNQNDHNLNNNELDSLSSPPSDN. A compositionally biased stretch (acidic residues) spans 54–63; sequence YNEEEFEQED. A compositionally biased stretch (polar residues) spans 73–92; sequence QNASQNNISQTQRISQTQLP. The segment covering 122 to 146 has biased composition (basic and acidic residues); the sequence is LMEKKKKEQEEKEKKELKLKKREDK. Residues 166–179 show a composition bias toward polar residues; the sequence is LESQTEQSDHSNVT. The span at 313–326 shows a compositional bias: basic and acidic residues; it reads EGDKEKDDKKDIAK. Residues 385 to 403 are compositionally biased toward basic and acidic residues; that stretch reads VPEKKPKKEKKKNESKEDN. Positions 404 to 423 are enriched in polar residues; the sequence is IQITSPKLNSTKSLSSQITR. Residues 424 to 450 show a composition bias toward basic and acidic residues; that stretch reads KTNDAKKVEKLPKIKDSNKENHSKERN. Residues 451–479 show a composition bias toward acidic residues; that stretch reads EDNEEGDDGEYECDEGDEGASDGEDEDDG. One can recognise a TTL domain in the interval 633 to 1009; it reads YFEKDPDIEK…DYGMEKSKKA (377 aa). Basic residues predominate over residues 709-721; it reads KQKPKKKKKKSKK. A compositionally biased stretch (basic and acidic residues) spans 722 to 733; sequence DKQQGDTEKKEE. Positions 734-754 are enriched in acidic residues; it reads EEGEAEDEEEDEEDEEEEEKQ. ATP contacts are provided by residues 821–824, Lys-834, and Asp-836; that span reads QKYI.

It localises to the cell projection. The protein localises to the cilium. It is found in the cytoplasm. Its subcellular location is the cytoskeleton. The protein resides in the cilium axoneme. Functionally, probable glycylase which modifies tubulin, generating side chains of glycine on the gamma-carboxyl groups of specific glutamate residues within the C-terminal tail of tubulin. The polypeptide is Tubulin glycylase 3C (TTLL3C) (Tetrahymena thermophila (strain SB210)).